Reading from the N-terminus, the 92-residue chain is Small ribosomal subunit protein uS19 (92 aa).

It belongs to the universal ribosomal protein uS19 family.

In terms of biological role, protein S19 forms a complex with S13 that binds strongly to the 16S ribosomal RNA. In Borrelia recurrentis (strain A1), this protein is Small ribosomal subunit protein uS19.